The primary structure comprises 213 residues: MDTLWDISPPVSPATPVWPGDTPVSVERVWRMEAGSPVNVARLTLSPHTGAHCDAPLHYDADGAPIGAVPLDTYLGPCRVIHCIGASPVVQPVDVAAALDGVPPRVLLRTYARASVEQWDSHFCAVAPETVDLLAAHGVKLIGIDTPSLDPQESKTMDAHHRVRAHRMAILEGIVLDDVPPGDYELIALPLKFATLDASPVRAVLRALPARAS.

Trp18 contacts substrate. Zn(2+) is bound by residues His48, His52, and Asp54. His58 acts as the Proton donor/acceptor in catalysis. The Zn(2+) site is built by His160 and Glu172.

Belongs to the Cyclase 1 superfamily. KynB family. As to quaternary structure, homodimer. The cofactor is Zn(2+).

The catalysed reaction is N-formyl-L-kynurenine + H2O = L-kynurenine + formate + H(+). It participates in amino-acid degradation; L-tryptophan degradation via kynurenine pathway; L-kynurenine from L-tryptophan: step 2/2. Catalyzes the hydrolysis of N-formyl-L-kynurenine to L-kynurenine, the second step in the kynurenine pathway of tryptophan degradation. The protein is Kynurenine formamidase of Burkholderia lata (strain ATCC 17760 / DSM 23089 / LMG 22485 / NCIMB 9086 / R18194 / 383).